A 400-amino-acid polypeptide reads, in one-letter code: MHISKINFNYQARAIYSANPQTSRGRLFYETMSTIRSPFQRDRDRIIHSNAFRRLKHKTQVFIADESDHYRTRLTHSIEVSQIARTLARALCLDEDLAEAIALAHDFGHTPFGHAGEDALNEAMAHYGGFDHNAQALRIVTKLEQRYANFDGLNLTWETLEGLVKHNGPLLGPYANNKDVPIDILQYNTKQDLKLNCFAGLEAQCAAIADDIAYNAHDIDDGLRSQFLTLGQFEQVSLTAVLLKDIEKEHPQLDKTRRGYELVRRQITTMVEDVIKQSQENLAHIKPTSISDVQQAEQTIVTFSPTMAVYEKELKNFLFKNLYYHDQVLSRRNAAKCIVQKLFDCYYKNPNVMPESWHSKTAHLTNQELARLIADFLSGMTDHYALREYQRLFDCTNNFV.

The 143-residue stretch at 73–215 (RLTHSIEVSQ…AAIADDIAYN (143 aa)) folds into the HD domain.

The protein belongs to the dGTPase family. Type 2 subfamily.

This chain is Deoxyguanosinetriphosphate triphosphohydrolase-like protein, found in Bartonella quintana (strain Toulouse) (Rochalimaea quintana).